The primary structure comprises 349 residues: N-acetyl-gamma-glutamyl-phosphate reductase (349 aa).

C152 is an active-site residue.

It belongs to the NAGSA dehydrogenase family. Type 1 subfamily.

It is found in the cytoplasm. It carries out the reaction N-acetyl-L-glutamate 5-semialdehyde + phosphate + NADP(+) = N-acetyl-L-glutamyl 5-phosphate + NADPH + H(+). It functions in the pathway amino-acid biosynthesis; L-arginine biosynthesis; N(2)-acetyl-L-ornithine from L-glutamate: step 3/4. Its function is as follows. Catalyzes the NADPH-dependent reduction of N-acetyl-5-glutamyl phosphate to yield N-acetyl-L-glutamate 5-semialdehyde. This chain is N-acetyl-gamma-glutamyl-phosphate reductase, found in Clavibacter sepedonicus (Clavibacter michiganensis subsp. sepedonicus).